The sequence spans 664 residues: DNA ligase (664 aa).

NAD(+) contacts are provided by residues 32 to 36 (DKEYD) and 80 to 81 (SL). The active-site N6-AMP-lysine intermediate is Lys122. NAD(+) is bound by residues Arg144, Glu178, and Lys314. Positions 407, 410, 423, and 429 each coordinate Zn(2+). The region spanning 587–664 (IDENPFMDKT…NEEEFSNKIK (78 aa)) is the BRCT domain.

It belongs to the NAD-dependent DNA ligase family. LigA subfamily. Mg(2+) serves as cofactor. The cofactor is Mn(2+).

The enzyme catalyses NAD(+) + (deoxyribonucleotide)n-3'-hydroxyl + 5'-phospho-(deoxyribonucleotide)m = (deoxyribonucleotide)n+m + AMP + beta-nicotinamide D-nucleotide.. In terms of biological role, DNA ligase that catalyzes the formation of phosphodiester linkages between 5'-phosphoryl and 3'-hydroxyl groups in double-stranded DNA using NAD as a coenzyme and as the energy source for the reaction. It is essential for DNA replication and repair of damaged DNA. This is DNA ligase from Clostridium botulinum (strain ATCC 19397 / Type A).